The primary structure comprises 623 residues: Glutathione import ATP-binding protein GsiA (623 aa).

2 ABC transporter domains span residues 15-269 and 314-564; these read VENL…RALL and LRVR…RKLL. ATP contacts are provided by residues 49–56 and 357–364; these read GESGSGKS.

The protein belongs to the ABC transporter superfamily. Glutathione importer (TC 3.A.1.5.11) family. The complex is composed of two ATP-binding proteins (GsiA), two transmembrane proteins (GsiC and GsiD) and a solute-binding protein (GsiB).

The protein resides in the cell inner membrane. It carries out the reaction glutathione(out) + ATP + H2O = glutathione(in) + ADP + phosphate + H(+). Its function is as follows. Part of the ABC transporter complex GsiABCD involved in glutathione import. Responsible for energy coupling to the transport system. This is Glutathione import ATP-binding protein GsiA from Shigella boydii serotype 4 (strain Sb227).